The sequence spans 91 residues: Probable Fe(2+)-trafficking protein (91 aa).

It belongs to the Fe(2+)-trafficking protein family.

Could be a mediator in iron transactions between iron acquisition and iron-requiring processes, such as synthesis and/or repair of Fe-S clusters in biosynthetic enzymes. The polypeptide is Probable Fe(2+)-trafficking protein (Mannheimia succiniciproducens (strain KCTC 0769BP / MBEL55E)).